A 138-amino-acid chain; its full sequence is Ribosomal RNA large subunit methyltransferase H (138 aa).

Residues L57, G86, and 105 to 110 contribute to the S-adenosyl-L-methionine site; that span reads LSPLTF.

This sequence belongs to the RNA methyltransferase RlmH family. Homodimer.

Its subcellular location is the cytoplasm. The catalysed reaction is pseudouridine(1915) in 23S rRNA + S-adenosyl-L-methionine = N(3)-methylpseudouridine(1915) in 23S rRNA + S-adenosyl-L-homocysteine + H(+). Specifically methylates the pseudouridine at position 1915 (m3Psi1915) in 23S rRNA. The chain is Ribosomal RNA large subunit methyltransferase H from Prochlorococcus marinus (strain MIT 9301).